The chain runs to 38 residues: Photosystem II reaction center protein L (38 aa).

Residues 17–37 (SLYWGLLLIFVLAVPFSNYFF) traverse the membrane as a helical segment.

This sequence belongs to the PsbL family. As to quaternary structure, PSII is composed of 1 copy each of membrane proteins PsbA, PsbB, PsbC, PsbD, PsbE, PsbF, PsbH, PsbI, PsbJ, PsbK, PsbL, PsbM, PsbT, PsbX, PsbY, PsbZ, Psb30/Ycf12, at least 3 peripheral proteins of the oxygen-evolving complex and a large number of cofactors. It forms dimeric complexes.

Its subcellular location is the plastid. It localises to the chloroplast thylakoid membrane. Its function is as follows. One of the components of the core complex of photosystem II (PSII). PSII is a light-driven water:plastoquinone oxidoreductase that uses light energy to abstract electrons from H(2)O, generating O(2) and a proton gradient subsequently used for ATP formation. It consists of a core antenna complex that captures photons, and an electron transfer chain that converts photonic excitation into a charge separation. This subunit is found at the monomer-monomer interface and is required for correct PSII assembly and/or dimerization. The protein is Photosystem II reaction center protein L of Pinus thunbergii (Japanese black pine).